Here is a 270-residue protein sequence, read N- to C-terminus: tRNA pseudouridine synthase A (270 aa).

Catalysis depends on D60, which acts as the Nucleophile. A substrate-binding site is contributed by Y118.

It belongs to the tRNA pseudouridine synthase TruA family. As to quaternary structure, homodimer.

The catalysed reaction is uridine(38/39/40) in tRNA = pseudouridine(38/39/40) in tRNA. In terms of biological role, formation of pseudouridine at positions 38, 39 and 40 in the anticodon stem and loop of transfer RNAs. This Salmonella typhimurium (strain LT2 / SGSC1412 / ATCC 700720) protein is tRNA pseudouridine synthase A.